Reading from the N-terminus, the 66-residue chain is ATP synthase protein 8 (66 aa).

A helical transmembrane segment spans residues 8–24; sequence TWLMMIMSMFLALFIIF. Residue lysine 54 is modified to N6-acetyllysine; alternate. N6-succinyllysine; alternate is present on lysine 54. Lysine 57 is subject to N6-acetyllysine.

The protein belongs to the ATPase protein 8 family. In terms of assembly, F-type ATPases have 2 components, CF(1) - the catalytic core - and CF(0) - the membrane proton channel. Component of an ATP synthase complex composed of ATP5PB, ATP5MC1, ATP5F1E, ATP5PD, ATP5ME, ATP5PF, ATP5MF, MT-ATP6, MT-ATP8, ATP5F1A, ATP5F1B, ATP5F1D, ATP5F1C, ATP5PO, ATP5MG, ATP5MK and ATP5MJ. Interacts with PRICKLE3.

The protein localises to the mitochondrion membrane. Mitochondrial membrane ATP synthase (F(1)F(0) ATP synthase or Complex V) produces ATP from ADP in the presence of a proton gradient across the membrane which is generated by electron transport complexes of the respiratory chain. F-type ATPases consist of two structural domains, F(1) - containing the extramembraneous catalytic core and F(0) - containing the membrane proton channel, linked together by a central stalk and a peripheral stalk. During catalysis, ATP synthesis in the catalytic domain of F(1) is coupled via a rotary mechanism of the central stalk subunits to proton translocation. Part of the complex F(0) domain. Minor subunit located with subunit a in the membrane. This chain is ATP synthase protein 8 (MT-ATP8), found in Cervus elaphus hippelaphus (European red deer).